The sequence spans 1293 residues: DNA-directed RNA polymerase subunit beta' (1293 aa).

Positions 60, 62, 75, and 78 each coordinate Zn(2+). Mg(2+) contacts are provided by Asp535, Asp537, and Asp539. 4 residues coordinate Zn(2+): Cys877, Cys953, Cys960, and Cys963.

Belongs to the RNA polymerase beta' chain family. As to quaternary structure, the RNAP catalytic core consists of 2 alpha, 1 beta, 1 beta' and 1 omega subunit. When a sigma factor is associated with the core the holoenzyme is formed, which can initiate transcription. Mg(2+) serves as cofactor. It depends on Zn(2+) as a cofactor.

The enzyme catalyses RNA(n) + a ribonucleoside 5'-triphosphate = RNA(n+1) + diphosphate. In terms of biological role, DNA-dependent RNA polymerase catalyzes the transcription of DNA into RNA using the four ribonucleoside triphosphates as substrates. The sequence is that of DNA-directed RNA polymerase subunit beta' from Kineococcus radiotolerans (strain ATCC BAA-149 / DSM 14245 / SRS30216).